A 271-amino-acid polypeptide reads, in one-letter code: ATP synthase subunit a (271 aa).

The next 5 membrane-spanning stretches (helical) occupy residues T40 to F60, L100 to L120, D146 to I166, L220 to P240, and A242 to V262.

This sequence belongs to the ATPase A chain family. As to quaternary structure, F-type ATPases have 2 components, CF(1) - the catalytic core - and CF(0) - the membrane proton channel. CF(1) has five subunits: alpha(3), beta(3), gamma(1), delta(1), epsilon(1). CF(0) has three main subunits: a(1), b(2) and c(9-12). The alpha and beta chains form an alternating ring which encloses part of the gamma chain. CF(1) is attached to CF(0) by a central stalk formed by the gamma and epsilon chains, while a peripheral stalk is formed by the delta and b chains.

The protein resides in the cell inner membrane. Its function is as follows. Key component of the proton channel; it plays a direct role in the translocation of protons across the membrane. The sequence is that of ATP synthase subunit a from Shigella dysenteriae serotype 1 (strain Sd197).